The primary structure comprises 341 residues: MAP3K12-binding inhibitory protein 1 (341 aa).

Ser-91 bears the Phosphoserine mark. Residues Lys-94, Lys-127, Lys-137, Lys-151, and Lys-233 each participate in a glycyl lysine isopeptide (Lys-Gly) (interchain with G-Cter in SUMO2) cross-link. The interval 170–341 (AEINENNVRE…EADSMAAHLP (172 aa)) is interaction with MAP3K12. Positions 269–283 (IYQRIKKLEDKILEL) are leucine-zipper 1. Lys-299 is modified (N6-acetyllysine; alternate). Residue Lys-299 forms a Glycyl lysine isopeptide (Lys-Gly) (interchain with G-Cter in SUMO2); alternate linkage. Glycyl lysine isopeptide (Lys-Gly) (interchain with G-Cter in SUMO2) cross-links involve residues Lys-302 and Lys-323. The segment at 312-327 (LAELDEKISALKRALL) is leucine-zipper 2.

As to quaternary structure, component of the ADA2A-containing complex (ATAC), composed of KAT14, KAT2A, TADA2L, TADA3L, ZZ3, MBIP, WDR5, YEATS2, CCDC101 and DR1. In the complex, it probably interacts directly with KAT2A, KAT14 and WDR5.

Its subcellular location is the nucleus. It localises to the cytoplasm. Its function is as follows. Inhibits the MAP3K12 activity to induce the activation of the JNK/SAPK pathway. Component of the ATAC complex, a complex with histone acetyltransferase activity on histones H3 and H4. This chain is MAP3K12-binding inhibitory protein 1 (Mbip), found in Mus musculus (Mouse).